We begin with the raw amino-acid sequence, 402 residues long: Meiosis-specific cyclin rem1 (402 aa).

It belongs to the cyclin family. Cyclin AB subfamily.

Its function is as follows. Required for pre-meiotic DNA synthesis and S phase progression. Regulates levels of meiotic intragenic recombination. This is Meiosis-specific cyclin rem1 (rem1) from Schizosaccharomyces pombe (strain 972 / ATCC 24843) (Fission yeast).